Reading from the N-terminus, the 684-residue chain is Histamine oxidase (684 aa).

Y316 to D327 is a binding site for substrate. The Proton acceptor role is filled by D318. A disulfide bond links C337 and C363. V399 to Y404 contacts substrate. The Schiff-base intermediate with substrate; via topaquinone role is filled by Y402. 2',4',5'-topaquinone is present on Y402. H451 and H453 together coordinate Cu cation. Ca(2+) contacts are provided by D460, E500, Y590, and D601. D460 is a binding site for Mn(2+). D601 is a binding site for Mn(2+). H612 provides a ligand contact to Cu cation. Residues S647–H684 are disordered. Residues D675 to H684 are compositionally biased toward gly residues.

This sequence belongs to the copper/topaquinone oxidase family. As to quaternary structure, homodimer. Cu cation is required as a cofactor. Requires Zn(2+) as cofactor. The cofactor is Ca(2+). It depends on L-topaquinone as a cofactor. Mn(2+) serves as cofactor. Topaquinone (TPQ) is generated by copper-dependent autoxidation of a specific tyrosyl residue.

The protein resides in the cytoplasm. The catalysed reaction is a primary methyl amine + O2 + H2O = an aldehyde + H2O2 + NH4(+). It carries out the reaction histamine + O2 + H2O = imidazole-4-acetaldehyde + H2O2 + NH4(+). Its function is as follows. Oxidizes histamine. Other amines including phenethylamine, tyramine, tryptamine, putrescine, and benzylamine also serve as substrate. The chain is Histamine oxidase from Arthrobacter globiformis.